The sequence spans 429 residues: Enolase (429 aa).

Glutamine 162 lines the (2R)-2-phosphoglycerate pocket. The active-site Proton donor is the glutamate 204. 3 residues coordinate Mg(2+): aspartate 241, glutamate 288, and aspartate 315. Residues lysine 340, arginine 369, serine 370, and lysine 391 each coordinate (2R)-2-phosphoglycerate. Catalysis depends on lysine 340, which acts as the Proton acceptor.

The protein belongs to the enolase family. Mg(2+) is required as a cofactor.

The protein localises to the cytoplasm. It localises to the secreted. It is found in the cell surface. The enzyme catalyses (2R)-2-phosphoglycerate = phosphoenolpyruvate + H2O. It participates in carbohydrate degradation; glycolysis; pyruvate from D-glyceraldehyde 3-phosphate: step 4/5. Catalyzes the reversible conversion of 2-phosphoglycerate (2-PG) into phosphoenolpyruvate (PEP). It is essential for the degradation of carbohydrates via glycolysis. This is Enolase from Christiangramia forsetii (strain DSM 17595 / CGMCC 1.15422 / KT0803) (Gramella forsetii).